A 436-amino-acid chain; its full sequence is Serine--tRNA ligase (436 aa).

Residue 239-241 (TAE) participates in L-serine binding. 270-272 (RKE) is an ATP binding site. Glu-293 provides a ligand contact to L-serine. Residue 357–360 (EISS) coordinates ATP. Residue Ser-392 participates in L-serine binding.

It belongs to the class-II aminoacyl-tRNA synthetase family. Type-1 seryl-tRNA synthetase subfamily. As to quaternary structure, homodimer. The tRNA molecule binds across the dimer.

It is found in the cytoplasm. The catalysed reaction is tRNA(Ser) + L-serine + ATP = L-seryl-tRNA(Ser) + AMP + diphosphate + H(+). The enzyme catalyses tRNA(Sec) + L-serine + ATP = L-seryl-tRNA(Sec) + AMP + diphosphate + H(+). Its pathway is aminoacyl-tRNA biosynthesis; selenocysteinyl-tRNA(Sec) biosynthesis; L-seryl-tRNA(Sec) from L-serine and tRNA(Sec): step 1/1. In terms of biological role, catalyzes the attachment of serine to tRNA(Ser). Is also able to aminoacylate tRNA(Sec) with serine, to form the misacylated tRNA L-seryl-tRNA(Sec), which will be further converted into selenocysteinyl-tRNA(Sec). This chain is Serine--tRNA ligase, found in Leuconostoc citreum (strain KM20).